A 241-amino-acid polypeptide reads, in one-letter code: Endo-chitosanase B (241 aa).

A signal peptide spans 1–17 (MRLSEILAVALVTGATA). N-linked (GlcNAc...) asparagine glycosylation occurs at Asn-86.

It belongs to the glycosyl hydrolase 75 family.

It is found in the secreted. It catalyses the reaction Endohydrolysis of beta-(1-&gt;4)-linkages between D-glucosamine residues in a partly acetylated chitosan.. Functionally, chitosanase catalyzing the endo-type cleavage of chitosan, the deacylated form of chitin. Chitosanase may be crucial in the degradation of the deacetylated portion of chitin in the fungal cell wall. Chitoolisaccharides produced by the hydrolysis of partially N-acetylated chitosan are known to have many biological activities, including antibacterial activity, immune-enhancing effects, and elicitor activity. The sequence is that of Endo-chitosanase B (csnB) from Aspergillus oryzae (strain ATCC 42149 / RIB 40) (Yellow koji mold).